The sequence spans 280 residues: Adenosylcobinamide-GDP ribazoletransferase (280 aa).

Transmembrane regions (helical) follow at residues 4-24, 34-54, 58-78, 108-128, 136-156, 197-217, and 254-274; these read YLLA…GITM, IFFY…VAYA, VFPG…ITGF, TLGT…YGSI, IAAF…IAEV, LIGF…IGLI, and ITAL…YLGG.

The protein belongs to the CobS family. It depends on Mg(2+) as a cofactor.

Its subcellular location is the cell membrane. The enzyme catalyses alpha-ribazole + adenosylcob(III)inamide-GDP = adenosylcob(III)alamin + GMP + H(+). The catalysed reaction is alpha-ribazole 5'-phosphate + adenosylcob(III)inamide-GDP = adenosylcob(III)alamin 5'-phosphate + GMP + H(+). Its pathway is cofactor biosynthesis; adenosylcobalamin biosynthesis; adenosylcobalamin from cob(II)yrinate a,c-diamide: step 7/7. Joins adenosylcobinamide-GDP and alpha-ribazole to generate adenosylcobalamin (Ado-cobalamin). Also synthesizes adenosylcobalamin 5'-phosphate from adenosylcobinamide-GDP and alpha-ribazole 5'-phosphate. This Methanosarcina mazei (strain ATCC BAA-159 / DSM 3647 / Goe1 / Go1 / JCM 11833 / OCM 88) (Methanosarcina frisia) protein is Adenosylcobinamide-GDP ribazoletransferase.